Consider the following 555-residue polypeptide: MIWVAVVITMLLFILVAKPTGIYLEKAFQGSKKLDKVFGPFEKLIFKITGVKEYNQTWKQYALSLVLLNGFMIVVVYFIFRLQGVLPLNPAHIEGMEPTLAFNTAISFMTDTNLQHYSGENGLSYLSQLIGITFLMFAAPATTLALVMAFIRGLAGKELGNFFVDFTRALTRVFLPIAFVTALVFVALGVPQTLDGAVTAQTIDGVKQSIVRGPVASFVSIKELGNNGGGFFGTNSTHPFENPGQMSNILQMMLMMLLPTALPFTYGRMVGNKKQGRILFVSLFMVFLLGFITITTSELNGNPALNAMGIEHVQGSTEGKEVRFGTVFSSLYATVTTAAETGAVNTMHDTLTPIGGLVPLVNMMLNTVYGGVGAGFVNIITYAIIAVFISGLMVGRTPEFLGKKIEGKEMKLIAVTILFHPLLILGFSALALSTSLGTDAISNLGFHGLTQIVYEYTSSAVNNGSGFEGLGDATTFWNITTGLVMFLGRYFSLVTMLAVAASLKEKTVVPETVGTFRTDNGLFGGIFIGTIVIVGALTFFPMLVLGPIAEFLTLK.

The next 10 membrane-spanning stretches (helical) occupy residues 2–22 (IWVAVVITMLLFILVAKPTGI), 60–80 (QYALSLVLLNGFMIVVVYFIF), 130–150 (IGITFLMFAAPATTLALVMAF), 173–193 (VFLPIAFVTALVFVALGVPQT), 246–266 (MSNILQMMLMMLLPTALPFTY), 278–298 (ILFVSLFMVFLLGFITITTSE), 374–394 (AGFVNIITYAIIAVFISGLMV), 412–432 (LIAVTILFHPLLILGFSALAL), 483–503 (LVMFLGRYFSLVTMLAVAASL), and 525–545 (GIFIGTIVIVGALTFFPMLVL).

The protein belongs to the KdpA family. The system is composed of three essential subunits: KdpA, KdpB and KdpC.

It is found in the cell membrane. Functionally, part of the high-affinity ATP-driven potassium transport (or Kdp) system, which catalyzes the hydrolysis of ATP coupled with the electrogenic transport of potassium into the cytoplasm. This subunit binds the extracellular potassium ions and delivers the ions to the membrane domain of KdpB through an intramembrane tunnel. This chain is Potassium-transporting ATPase potassium-binding subunit, found in Bacillus thuringiensis subsp. konkukian (strain 97-27).